Reading from the N-terminus, the 409-residue chain is Nucleoprotein (409 aa).

2 disordered regions span residues 1–84 and 121–194; these read MASG…KGGR and ADTK…DSGD. Residues 15 to 31 show a composition bias toward low complexity; that stretch reads PVIKLGGPKPPKVGSSG. An RNA-binding region spans residues 29-160; it reads SSGNASWFQA…GNFRWDFIPL (132 aa). The CoV N NTD domain maps to 31–156; the sequence is GNASWFQAIK…GGPDGNFRWD (126 aa). A compositionally biased stretch (basic residues) spans 70-84; the sequence is YWRRQARFKPGKGGR. Residues 162-179 are compositionally biased toward low complexity; that stretch reads RGRSGRSTAASSAAASRA. A compositionally biased stretch (basic and acidic residues) spans 180–192; it reads PSREGSRGRRSDS. S190 and S192 each carry phosphoserine; by host. The CoV N CTD domain maps to 215–331; that stretch reads TKAKADEMAH…QCVDGVGTRP (117 aa). Positions 226–333 are dimerization; that stretch reads RYCKRTIPPN…VDGVGTRPKD (108 aa). 2 cysteine pairs are disulfide-bonded: C281–C308 and C320–C323. Residues 327–396 are disordered; the sequence is VGTRPKDDEP…QLEFYDEPKV (70 aa). Residues 358 to 367 are compositionally biased toward basic residues; the sequence is QRPKKEKKLK. Basic and acidic residues predominate over residues 368–384; sequence KQDDEADKALTSDEERN. Residue T378 is modified to Phosphothreonine; by host. S379 carries the phosphoserine; by host modification.

It belongs to the gammacoronavirus nucleocapsid protein family. In terms of assembly, homooligomer. Both monomeric and oligomeric forms interact with RNA. Interacts with protein M. Interacts with NSP3; this interaction serves to tether the genome to the newly translated replicase-transcriptase complex at a very early stage of infection. In terms of processing, ADP-ribosylated. The ADP-ribosylation is retained in the virion during infection. Phosphorylated on serine and threonine residues.

Its subcellular location is the virion. The protein resides in the host endoplasmic reticulum-Golgi intermediate compartment. The protein localises to the host Golgi apparatus. Functionally, packages the positive strand viral genome RNA into a helical ribonucleocapsid (RNP) and plays a fundamental role during virion assembly through its interactions with the viral genome and membrane protein M. Plays an important role in enhancing the efficiency of subgenomic viral RNA transcription as well as viral replication. This chain is Nucleoprotein, found in Gallus gallus (Chicken).